The following is a 119-amino-acid chain: Large ribosomal subunit protein bL19 (119 aa).

The protein belongs to the bacterial ribosomal protein bL19 family.

Its function is as follows. This protein is located at the 30S-50S ribosomal subunit interface and may play a role in the structure and function of the aminoacyl-tRNA binding site. The polypeptide is Large ribosomal subunit protein bL19 (Treponema denticola (strain ATCC 35405 / DSM 14222 / CIP 103919 / JCM 8153 / KCTC 15104)).